A 164-amino-acid polypeptide reads, in one-letter code: Translation initiation factor IF-3 (164 aa).

It belongs to the IF-3 family. In terms of assembly, monomer.

The protein resides in the cytoplasm. Its function is as follows. IF-3 binds to the 30S ribosomal subunit and shifts the equilibrium between 70S ribosomes and their 50S and 30S subunits in favor of the free subunits, thus enhancing the availability of 30S subunits on which protein synthesis initiation begins. In Bordetella bronchiseptica (strain ATCC BAA-588 / NCTC 13252 / RB50) (Alcaligenes bronchisepticus), this protein is Translation initiation factor IF-3.